Reading from the N-terminus, the 260-residue chain is Sodium channel modifier 1 (260 aa).

Positions 4–20 match the Bipartite nuclear localization signal motif; it reads KRDGDDSSQLNVLKKRR. The segment at 42 to 74 adopts a Matrin-type zinc-finger fold; it reads YACTVCHHRPVFNTIDMLSVHRTGKKHLGGLQR. Residues 143-260 form a disordered region; the sequence is RNVYDPHSGP…EEEPPALPPS (118 aa). Residues 166-187 show a composition bias toward polar residues; the sequence is PGPSQPHTSLHSPPTGPCSSPT. Positions 202-221 are enriched in basic and acidic residues; it reads KGEEKFRKEIADPERERNME. The segment covering 245-254 has biased composition (acidic residues); it reads VEFDSDEEEP.

As to quaternary structure, component of the minor spliceosome, which splices U12-type introns.

The protein resides in the nucleus. Its subcellular location is the nucleoplasm. It is found in the nucleus speckle. In terms of biological role, as a component of the minor spliceosome, involved in the splicing of U12-type introns in pre-mRNAs. This is Sodium channel modifier 1 (scnm1) from Xenopus laevis (African clawed frog).